The sequence spans 386 residues: DNA (cytosine-5)-methyltransferase 3-like (386 aa).

The region spanning 41–173 is the ADD domain; that stretch reads EVKANQRNIE…LKAFYDRESE (133 aa). The segment at 52-82 adopts a GATA-type; atypical zinc-finger fold; that stretch reads ICICCGSLQVHTQHPLFEGGICAPCKDKFLD. The segment at 93–149 adopts a PHD-type; atypical zinc-finger fold; that stretch reads QSYCSICCSGETLLICGNPDCTRCYCFECVDSLVGPGTSGKVHAMSNWVCYLCLPSS.

In terms of assembly, homodimer. Heterotetramer composed of 1 DNMT3A homodimer and 2 DNMT3L subunits (DNMT3L-DNMT3A-DNMT3A-DNMT3L). Interacts with histone H3 (via N-terminus); interaction is strongly inhibited by methylation at lysine 4 (H3K4me). Interacts with EZH2; the interaction is direct. Interacts with SPOCD1. Expressed at low levels in several tissues including testis, ovary, and thymus.

It is found in the nucleus. Functionally, catalytically inactive regulatory factor of DNA methyltransferases that can either promote or inhibit DNA methylation depending on the context. Essential for the function of DNMT3A and DNMT3B: activates DNMT3A and DNMT3B by binding to their catalytic domain. Acts by accelerating the binding of DNA and S-adenosyl-L-methionine (AdoMet) to the methyltransferases and dissociates from the complex after DNA binding to the methyltransferases. Recognizes unmethylated histone H3 lysine 4 (H3K4me0) and induces de novo DNA methylation by recruitment or activation of DNMT3. Plays a key role in embryonic stem cells and germ cells. In germ cells, required for the methylation of imprinted loci together with DNMT3A. In male germ cells, specifically required to methylate retrotransposons, preventing their mobilization. Plays a key role in embryonic stem cells (ESCs) by acting both as an positive and negative regulator of DNA methylation. While it promotes DNA methylation of housekeeping genes together with DNMT3A and DNMT3B, it also acts as an inhibitor of DNA methylation at the promoter of bivalent genes. Interacts with the EZH2 component of the PRC2/EED-EZH2 complex, preventing interaction of DNMT3A and DNMT3B with the PRC2/EED-EZH2 complex, leading to maintain low methylation levels at the promoters of bivalent genes. Promotes differentiation of ESCs into primordial germ cells by inhibiting DNA methylation at the promoter of RHOX5, thereby activating its expression. The protein is DNA (cytosine-5)-methyltransferase 3-like (DNMT3L) of Homo sapiens (Human).